The primary structure comprises 391 residues: Ribosomal RNA small subunit methyltransferase H (391 aa).

The tract at residues 1–23 (MDVDVQDDVQGRAGEGAEERAHD) is disordered. S-adenosyl-L-methionine is bound by residues 59 to 61 (GGH), Asp78, Leu112, Asp126, and Gln133. Residues 284 to 391 (SSSSAPPDLP…EPGATVERTP (108 aa)) are disordered. The segment covering 368-380 (RTQEFETHPHLEP) has biased composition (basic and acidic residues).

The protein belongs to the methyltransferase superfamily. RsmH family.

It localises to the cytoplasm. The enzyme catalyses cytidine(1402) in 16S rRNA + S-adenosyl-L-methionine = N(4)-methylcytidine(1402) in 16S rRNA + S-adenosyl-L-homocysteine + H(+). Specifically methylates the N4 position of cytidine in position 1402 (C1402) of 16S rRNA. The protein is Ribosomal RNA small subunit methyltransferase H of Kineococcus radiotolerans (strain ATCC BAA-149 / DSM 14245 / SRS30216).